A 547-amino-acid chain; its full sequence is CTP synthase (547 aa).

An amidoligase domain region spans residues 1 to 273 (MNNKKLKSKF…DHFILNHFQL (273 aa)). Residue S19 coordinates CTP. S19 is a UTP binding site. 20-25 (SLGKGI) contributes to the ATP binding site. Position 60 (Y60) interacts with L-glutamine. D77 is a binding site for ATP. Positions 77 and 147 each coordinate Mg(2+). Residues 154 to 156 (DIE), 194 to 199 (KTKPTQ), and K230 contribute to the CTP site. UTP-binding positions include 194 to 199 (KTKPTQ) and K230. Positions 306–539 (YVILHDAYLS…VEAALLKNGK (234 aa)) constitute a Glutamine amidotransferase type-1 domain. L-glutamine is bound at residue G361. C388 acts as the Nucleophile; for glutamine hydrolysis in catalysis. L-glutamine is bound by residues 389–392 (FGMQ), E412, and R466. Active-site residues include H512 and E514.

The protein belongs to the CTP synthase family. Homotetramer.

The enzyme catalyses UTP + L-glutamine + ATP + H2O = CTP + L-glutamate + ADP + phosphate + 2 H(+). It catalyses the reaction L-glutamine + H2O = L-glutamate + NH4(+). The catalysed reaction is UTP + NH4(+) + ATP = CTP + ADP + phosphate + 2 H(+). It participates in pyrimidine metabolism; CTP biosynthesis via de novo pathway; CTP from UDP: step 2/2. Its activity is regulated as follows. Allosterically activated by GTP, when glutamine is the substrate; GTP has no effect on the reaction when ammonia is the substrate. The allosteric effector GTP functions by stabilizing the protein conformation that binds the tetrahedral intermediate(s) formed during glutamine hydrolysis. Inhibited by the product CTP, via allosteric rather than competitive inhibition. In terms of biological role, catalyzes the ATP-dependent amination of UTP to CTP with either L-glutamine or ammonia as the source of nitrogen. Regulates intracellular CTP levels through interactions with the four ribonucleotide triphosphates. This Phytoplasma australiense protein is CTP synthase.